A 496-amino-acid polypeptide reads, in one-letter code: Lysine--tRNA ligase (496 aa).

Positions 409 and 416 each coordinate Mg(2+).

It belongs to the class-II aminoacyl-tRNA synthetase family. In terms of assembly, homodimer. Mg(2+) serves as cofactor.

The protein localises to the cytoplasm. The catalysed reaction is tRNA(Lys) + L-lysine + ATP = L-lysyl-tRNA(Lys) + AMP + diphosphate. The polypeptide is Lysine--tRNA ligase (Streptococcus pneumoniae (strain Hungary19A-6)).